Reading from the N-terminus, the 865-residue chain is Alanine--tRNA ligase (865 aa).

Zn(2+)-binding residues include histidine 554, histidine 558, cysteine 656, and histidine 660.

Belongs to the class-II aminoacyl-tRNA synthetase family. Requires Zn(2+) as cofactor.

The protein localises to the cytoplasm. It catalyses the reaction tRNA(Ala) + L-alanine + ATP = L-alanyl-tRNA(Ala) + AMP + diphosphate. Functionally, catalyzes the attachment of alanine to tRNA(Ala) in a two-step reaction: alanine is first activated by ATP to form Ala-AMP and then transferred to the acceptor end of tRNA(Ala). Also edits incorrectly charged Ser-tRNA(Ala) and Gly-tRNA(Ala) via its editing domain. This Francisella tularensis subsp. tularensis (strain FSC 198) protein is Alanine--tRNA ligase.